A 170-amino-acid polypeptide reads, in one-letter code: Ureidoglycolate lyase (170 aa).

It belongs to the ureidoglycolate lyase family. As to quaternary structure, homodimer. Requires Ni(2+) as cofactor.

The enzyme catalyses (S)-ureidoglycolate = urea + glyoxylate. It functions in the pathway nitrogen metabolism; (S)-allantoin degradation. In terms of biological role, catalyzes the catabolism of the allantoin degradation intermediate (S)-ureidoglycolate, generating urea and glyoxylate. Involved in the utilization of allantoin as nitrogen source. This Pseudomonas syringae pv. syringae (strain B728a) protein is Ureidoglycolate lyase.